The chain runs to 250 residues: 2,3-bisphosphoglycerate-dependent phosphoglycerate mutase (250 aa).

Residues 10–17 (RHGESQWN), 23–24 (TG), arginine 62, 89–92 (ERHY), lysine 100, 116–117 (RR), and 185–186 (GN) contribute to the substrate site. The active-site Tele-phosphohistidine intermediate is the histidine 11. Glutamate 89 serves as the catalytic Proton donor/acceptor.

This sequence belongs to the phosphoglycerate mutase family. BPG-dependent PGAM subfamily. Homodimer.

It carries out the reaction (2R)-2-phosphoglycerate = (2R)-3-phosphoglycerate. The protein operates within carbohydrate degradation; glycolysis; pyruvate from D-glyceraldehyde 3-phosphate: step 3/5. Functionally, catalyzes the interconversion of 2-phosphoglycerate and 3-phosphoglycerate. This is 2,3-bisphosphoglycerate-dependent phosphoglycerate mutase from Serratia proteamaculans (strain 568).